The chain runs to 248 residues: Pulmonary surfactant-associated protein A (248 aa).

Positions 1–20 (MSLGSLAFTLFLTVVAGIKC) are cleaved as a signal peptide. Residue Asn-21 is glycosylated (N-linked (GlcNAc...) asparagine). The Collagen-like domain maps to 28 to 100 (GSPGIPGTPG…PGERGLPGFP (73 aa)). Positions 28–100 (GSPGIPGTPG…PGERGLPGFP (73 aa)) are disordered. 4-hydroxyproline occurs at positions 30, 33, 36, 42, 54, 57, 63, 67, 70, and 76. Basic and acidic residues predominate over residues 42–51 (PGRDGRDGIK). Residues 54–65 (PGPPGPMGPPGG) show a composition bias toward pro residues. A compositionally biased stretch (low complexity) spans 69–82 (LPGRDGLPGAPGAP). The span at 84-93 (EHGDKGEPGE) shows a compositional bias: basic and acidic residues. Residues 132 to 248 (LSVGDKVFST…LQYRLAICEF (117 aa)) form the C-type lectin domain. 2 disulfides stabilise this stretch: Cys-155–Cys-246 and Cys-224–Cys-238. N-linked (GlcNAc...) asparagine glycosylation occurs at Asn-207. Ca(2+)-binding residues include Glu-215, Arg-217, Asn-234, and Asp-235.

Belongs to the SFTPA family. As to quaternary structure, oligomeric complex of 6 set of homotrimers.

The protein localises to the secreted. It is found in the extracellular space. The protein resides in the extracellular matrix. It localises to the surface film. Its function is as follows. In presence of calcium ions, it binds to surfactant phospholipids and contributes to lower the surface tension at the air-liquid interface in the alveoli of the mammalian lung and is essential for normal respiration. Enhances the expression of MYO18A/SP-R210 on alveolar macrophages. This Mus musculus (Mouse) protein is Pulmonary surfactant-associated protein A (Sftpa1).